The following is a 325-amino-acid chain: Homocysteine S-methyltransferase 2 (325 aa).

A Hcy-binding domain is found at 6–321; the sequence is LKQFLADNPK…KDIQEISAAV (316 aa). Thr138 carries the post-translational modification Phosphothreonine. Cys239, Cys306, and Cys307 together coordinate Zn(2+).

The cofactor is Zn(2+).

It is found in the cytoplasm. Its subcellular location is the nucleus. The catalysed reaction is S-methyl-L-methionine + L-homocysteine = 2 L-methionine + H(+). Functionally, homocysteine S-methyltransferase involved in the conversion of S-adenosylmethionine (AdoMet) to methionine to control the methionine/AdoMet ratio. Also converts S-methylmethionine (SMM) to methionine. This is Homocysteine S-methyltransferase 2 (SAM4) from Saccharomyces cerevisiae (strain ATCC 204508 / S288c) (Baker's yeast).